Here is a 287-residue protein sequence, read N- to C-terminus: Nucleotide-binding protein VIBHAR_03667 (287 aa).

8-15 (GHSGAGKS) is an ATP binding site. Position 56–59 (56–59 (DIRN)) interacts with GTP.

Belongs to the RapZ-like family.

Functionally, displays ATPase and GTPase activities. The polypeptide is Nucleotide-binding protein VIBHAR_03667 (Vibrio campbellii (strain ATCC BAA-1116)).